We begin with the raw amino-acid sequence, 337 residues long: Tetraacyldisaccharide 4'-kinase (337 aa).

Residue 55 to 62 (TIGGNGKT) coordinates ATP.

This sequence belongs to the LpxK family.

The enzyme catalyses a lipid A disaccharide + ATP = a lipid IVA + ADP + H(+). It participates in glycolipid biosynthesis; lipid IV(A) biosynthesis; lipid IV(A) from (3R)-3-hydroxytetradecanoyl-[acyl-carrier-protein] and UDP-N-acetyl-alpha-D-glucosamine: step 6/6. Its function is as follows. Transfers the gamma-phosphate of ATP to the 4'-position of a tetraacyldisaccharide 1-phosphate intermediate (termed DS-1-P) to form tetraacyldisaccharide 1,4'-bis-phosphate (lipid IVA). This is Tetraacyldisaccharide 4'-kinase from Blochmanniella pennsylvanica (strain BPEN).